The primary structure comprises 348 residues: Phosphate acyltransferase (348 aa).

This sequence belongs to the PlsX family. Homodimer. Probably interacts with PlsY.

It localises to the cytoplasm. It catalyses the reaction a fatty acyl-[ACP] + phosphate = an acyl phosphate + holo-[ACP]. The protein operates within lipid metabolism; phospholipid metabolism. Catalyzes the reversible formation of acyl-phosphate (acyl-PO(4)) from acyl-[acyl-carrier-protein] (acyl-ACP). This enzyme utilizes acyl-ACP as fatty acyl donor, but not acyl-CoA. This Oenococcus oeni (strain ATCC BAA-331 / PSU-1) protein is Phosphate acyltransferase.